We begin with the raw amino-acid sequence, 585 residues long: Arginine--tRNA ligase (585 aa).

The 'HIGH' region motif lies at 131–141 (ANPTGPMHVGH).

Belongs to the class-I aminoacyl-tRNA synthetase family. As to quaternary structure, monomer.

Its subcellular location is the cytoplasm. The catalysed reaction is tRNA(Arg) + L-arginine + ATP = L-arginyl-tRNA(Arg) + AMP + diphosphate. The polypeptide is Arginine--tRNA ligase (Rhizobium leguminosarum bv. trifolii (strain WSM2304)).